Here is a 231-residue protein sequence, read N- to C-terminus: Ribonuclease 3 (231 aa).

One can recognise an RNase III domain in the interval 5 to 134; the sequence is QEKLKNDYGL…FLGALFIDQG (130 aa). Glutamate 47 serves as a coordination point for Mg(2+). Aspartate 51 is an active-site residue. Mg(2+) contacts are provided by asparagine 120 and glutamate 123. Residue glutamate 123 is part of the active site. The 70-residue stretch at 160 to 229 folds into the DRBM domain; the sequence is DYKTELQEVL…AENAIKGQNH (70 aa).

This sequence belongs to the ribonuclease III family. As to quaternary structure, homodimer. Requires Mg(2+) as cofactor.

It localises to the cytoplasm. It carries out the reaction Endonucleolytic cleavage to 5'-phosphomonoester.. In terms of biological role, digests double-stranded RNA. Involved in the processing of primary rRNA transcript to yield the immediate precursors to the large and small rRNAs (23S and 16S). Processes some mRNAs, and tRNAs when they are encoded in the rRNA operon. Processes pre-crRNA and tracrRNA of type II CRISPR loci if present in the organism. The polypeptide is Ribonuclease 3 (Lactococcus lactis subsp. cremoris (strain SK11)).